Reading from the N-terminus, the 302-residue chain is Cuticle collagen 40 (302 aa).

2 disordered regions span residues 79–103 (RIKR…GGGG) and 119–302 (AGAP…APGY). Over residues 91 to 103 (YAEGGAAAGGGGG) the composition is skewed to gly residues. 5 triple-helical region regions span residues 114–143 (GAAG…AGSD), 162–185 (GPAG…DGNT), 189–221 (GGEG…PGQV), 226–252 (GTPG…AGAS), and 255–290 (GPAG…GGGC). Over residues 137–154 (PGTAGSDAEAAAAPTASD) the composition is skewed to low complexity. Positions 194-203 (AGPPGPPGPA) are enriched in pro residues. Low complexity-rich tracts occupy residues 205–234 (NPGT…AGAA) and 245–281 (NPGS…PGEA). The segment covering 293–302 (CPPPRTAPGY) has biased composition (pro residues).

This sequence belongs to the cuticular collagen family. As to quaternary structure, collagen polypeptide chains are complexed within the cuticle by disulfide bonds and other types of covalent cross-links.

Functionally, nematode cuticles are composed largely of collagen-like proteins. The cuticle functions both as an exoskeleton and as a barrier to protect the worm from its environment. The chain is Cuticle collagen 40 (col-40) from Caenorhabditis elegans.